A 779-amino-acid chain; its full sequence is Subtilisin-like protease SBT3.18 (779 aa).

Positions 1 to 21 are cleaved as a signal peptide; sequence MYFWVMFFTLMIKVKLYITNG. A propeptide spans 22–109 (activation peptide); it reads DIFQNRPTVY…VFKSKSLKLH (88 aa). The region spanning 30–109 is the Inhibitor I9 domain; that stretch reads VYVVYLGANR…VFKSKSLKLH (80 aa). N-linked (GlcNAc...) asparagine glycosylation is present at N84. Positions 113-621 constitute a Peptidase S8 domain; the sequence is SWDFLGLAVD…AGHINPLKAM (509 aa). Residues D144 and H221 each act as charge relay system in the active site. N236 and N406 each carry an N-linked (GlcNAc...) asparagine glycan. S553 functions as the Charge relay system in the catalytic mechanism.

This sequence belongs to the peptidase S8 family.

It localises to the secreted. The polypeptide is Subtilisin-like protease SBT3.18 (Arabidopsis thaliana (Mouse-ear cress)).